The chain runs to 213 residues: Probable anti-sigma-F factor NrsF (213 aa).

Transmembrane regions (helical) follow at residues 27-47, 51-71, 91-111, 126-146, 159-179, and 187-207; these read ALAI…LLQV, LGLA…TCLA, VPAA…FTLI, TWKS…AAVL, LAGF…YCLH, and FIGF…VLLG.

The protein belongs to the NrsF anti-sigma-F factor family.

It localises to the cell inner membrane. Functionally, probably an anti-sigma factor for extracytoplasmic function (ECF) sigma factor sigma-F (SigF), which responds to (hypo)chlorite. ECF sigma factors are held in an inactive form by a cognate anti-sigma factor. The sequence is that of Probable anti-sigma-F factor NrsF from Azospira oryzae (strain ATCC BAA-33 / DSM 13638 / PS) (Dechlorosoma suillum).